The chain runs to 224 residues: MKTIHDIRRSNARKLRDGVGGNSSFATMIDREPTQTSRFMGDGATKNIGDSMARHIEKCFDLPVGWLDQEHQTTNITKKPDVSITNKQITLVPVISWVQAGAWKEVGYSEVDLSTAETYPCPVPCGEMTYILRVIGDSMIDEYRPGDMIFVDPEVPACHGDDVIALMHDTGETTFKRLIEDGTQRYLKALNPNWPEPYIKINGNCSIIGTVIFSGKPRRYKIKA.

The chain is Prophage repressor CohE (cohE) from Escherichia coli (strain K12).